Here is a 327-residue protein sequence, read N- to C-terminus: Beta-ketoacyl-[acyl-carrier-protein] synthase III 2 (327 aa).

Residues Cys-114 and His-251 contribute to the active site. Positions 252 to 256 (SANLR) are ACP-binding. Residue Asn-281 is part of the active site.

Belongs to the thiolase-like superfamily. FabH family. As to quaternary structure, homodimer.

It is found in the cytoplasm. It carries out the reaction malonyl-[ACP] + acetyl-CoA + H(+) = 3-oxobutanoyl-[ACP] + CO2 + CoA. It participates in lipid metabolism; fatty acid biosynthesis. Its function is as follows. Catalyzes the condensation reaction of fatty acid synthesis by the addition to an acyl acceptor of two carbons from malonyl-ACP. Catalyzes the first condensation reaction which initiates fatty acid synthesis and may therefore play a role in governing the total rate of fatty acid production. Possesses both acetoacetyl-ACP synthase and acetyl transacylase activities. Its substrate specificity determines the biosynthesis of branched-chain and/or straight-chain of fatty acids. This chain is Beta-ketoacyl-[acyl-carrier-protein] synthase III 2, found in Bacillus anthracis.